The primary structure comprises 290 residues: Porphobilinogen deaminase (290 aa).

Position 237 is an S-(dipyrrolylmethanemethyl)cysteine (C237).

It belongs to the HMBS family. Monomer. Dipyrromethane is required as a cofactor.

It carries out the reaction 4 porphobilinogen + H2O = hydroxymethylbilane + 4 NH4(+). The protein operates within porphyrin-containing compound metabolism; protoporphyrin-IX biosynthesis; coproporphyrinogen-III from 5-aminolevulinate: step 2/4. Tetrapolymerization of the monopyrrole PBG into the hydroxymethylbilane pre-uroporphyrinogen in several discrete steps. This chain is Porphobilinogen deaminase, found in Clostridium botulinum (strain ATCC 19397 / Type A).